The chain runs to 142 residues: Large ribosomal subunit protein uL13 (142 aa).

This sequence belongs to the universal ribosomal protein uL13 family. As to quaternary structure, part of the 50S ribosomal subunit.

Its function is as follows. This protein is one of the early assembly proteins of the 50S ribosomal subunit, although it is not seen to bind rRNA by itself. It is important during the early stages of 50S assembly. The chain is Large ribosomal subunit protein uL13 from Burkholderia cenocepacia (strain ATCC BAA-245 / DSM 16553 / LMG 16656 / NCTC 13227 / J2315 / CF5610) (Burkholderia cepacia (strain J2315)).